A 299-amino-acid polypeptide reads, in one-letter code: Lipoyl synthase (299 aa).

Residues Cys45, Cys50, Cys56, Cys71, Cys75, Cys78, and Ser284 each coordinate [4Fe-4S] cluster. Residues Tyr57–Leu273 enclose the Radical SAM core domain.

This sequence belongs to the radical SAM superfamily. Lipoyl synthase family. Requires [4Fe-4S] cluster as cofactor.

It is found in the cytoplasm. It catalyses the reaction [[Fe-S] cluster scaffold protein carrying a second [4Fe-4S](2+) cluster] + N(6)-octanoyl-L-lysyl-[protein] + 2 oxidized [2Fe-2S]-[ferredoxin] + 2 S-adenosyl-L-methionine + 4 H(+) = [[Fe-S] cluster scaffold protein] + N(6)-[(R)-dihydrolipoyl]-L-lysyl-[protein] + 4 Fe(3+) + 2 hydrogen sulfide + 2 5'-deoxyadenosine + 2 L-methionine + 2 reduced [2Fe-2S]-[ferredoxin]. It participates in protein modification; protein lipoylation via endogenous pathway; protein N(6)-(lipoyl)lysine from octanoyl-[acyl-carrier-protein]: step 2/2. Its function is as follows. Catalyzes the radical-mediated insertion of two sulfur atoms into the C-6 and C-8 positions of the octanoyl moiety bound to the lipoyl domains of lipoate-dependent enzymes, thereby converting the octanoylated domains into lipoylated derivatives. The sequence is that of Lipoyl synthase from Desulfotalea psychrophila (strain LSv54 / DSM 12343).